An 856-amino-acid chain; its full sequence is Serine/threonine-protein kinase unc-51 (856 aa).

The Protein kinase domain occupies 9–275 (YSKRDLLGHG…FEDFFNHPFL (267 aa)). ATP contacts are provided by residues 15-23 (LGHGAFAIV) and Lys-39. The Proton acceptor role is filled by Asp-134. A disordered region spans residues 304–327 (PQSSLPVPKRAGSTKLDSPTPVRR). Residues 358–361 (FTFL) carry the LIR motif. 3 disordered regions span residues 362–391 (PPRQESSPVKQVQVHTNVSPSLTTCKPVPV), 405–471 (LAAA…ERMT), and 520–582 (PTTT…PTEP). The span at 365–385 (QESSPVKQVQVHTNVSPSLTT) shows a compositional bias: polar residues. The span at 411–436 (TAVPSSSSPTGSAVSAQHQHQHQQQQ) shows a compositional bias: low complexity. Composition is skewed to polar residues over residues 527 to 536 (IPKSATTANI) and 566 to 578 (KYQQTDVNNSPTA). The segment at 750–856 (YHQCLVRSQE…RQGFVAAVNT (107 aa)) is required for interaction with unc-14 and vab-8.

It belongs to the protein kinase superfamily. Ser/Thr protein kinase family. APG1/unc-51/ULK1 subfamily. In terms of assembly, interacts with unc-14 and vab-8. Interacts (via C-terminus) with atg-13. Interacts (via the LIR motif) with lgg-1; the interaction is direct. The cofactor is Mg(2+).

The catalysed reaction is L-seryl-[protein] + ATP = O-phospho-L-seryl-[protein] + ADP + H(+). The enzyme catalyses L-threonyl-[protein] + ATP = O-phospho-L-threonyl-[protein] + ADP + H(+). Protein kinase important for axonal elongation and axonal guidance. Functions in the CAN axons to direct both anterior and posterior migrations. Phosphorylates both unc-14 and vab-8. Component of the unc-51/atg-13 complex that is probably recruited by lgg-1 to preautophagosomes and is required for autophagosome formation. Interaction with autophagy related proteins such as atg-13 links it to the autophagy machinery to in turn promote P-granule degradation in somatic cells. Plays a role in mitophagy during limited food availability. Regulates cell size. Plays a role in male tail ray pattern formation. May be required for normal dauer morphogenesis. In Caenorhabditis elegans, this protein is Serine/threonine-protein kinase unc-51.